A 451-amino-acid chain; its full sequence is ACT domain-containing protein ACR4 (451 aa).

4 consecutive ACT domains span residues 35-118 (VIRV…VIPS), 123-200 (VIEL…NTPR), 259-335 (VVTV…VSEG), and 337-416 (KLEL…QEQQ). A disordered region spans residues 409 to 428 (KNNPQEQQQRQKSPSHESPT). Positions 410-420 (NNPQEQQQRQK) are enriched in polar residues.

As to expression, highly expressed in flowers and at lower levels in leaves and siliques.

May bind amino acids. The sequence is that of ACT domain-containing protein ACR4 from Arabidopsis thaliana (Mouse-ear cress).